A 98-amino-acid polypeptide reads, in one-letter code: Feather keratin 2 (98 aa).

An N-acetylserine modification is found at S2.

Belongs to the avian keratin family. As to quaternary structure, the avian keratins (F-ker, S-ker, C-ker and B-ker) are a complex mixture of very similar polypeptides.

The polypeptide is Feather keratin 2 (Gallus gallus (Chicken)).